Consider the following 509-residue polypeptide: Activin receptor type-1 (509 aa).

Residues 1 to 20 form the signal peptide; sequence MVDGAMILSVLMMMALPSPS. Over 21 to 123 the chain is Extracellular; sequence MEDEEPKVNP…FPGSQNFHLE (103 aa). The N-linked (GlcNAc...) asparagine glycan is linked to N102. The chain crosses the membrane as a helical span at residues 124-146; sequence VGLIILSVVFAVCLFACILGVAL. The Cytoplasmic portion of the chain corresponds to 147 to 509; sequence RKFKRRNQER…NSLDKLKTDC (363 aa). Residues 178–207 enclose the GS domain; sequence STLAELLDHSCTSGSGSGLPFLVQRTVARQ. The 295-residue stretch at 208 to 502 folds into the Protein kinase domain; sequence ITLLECVGKG…KTLTKIDNSL (295 aa). Residues 214–222 and K235 each bind ATP; that span reads VGKGRYGEV. The active-site Proton acceptor is the D336. Position 501 is a phosphoserine (S501).

It belongs to the protein kinase superfamily. TKL Ser/Thr protein kinase family. TGFB receptor subfamily. In terms of assembly, interacts with FKBP1A. Interacts with FCHO1. Interacts with CLU. Interacts with type II receptors AMHR2 and ACVR2A. Interacts with BMP7. Interacts with GDF2/BMP9. Interacts with BMP6 (when glycosylated); the interaction may induce HAMP expression. Interacts with TSC22D1/TSC-22. The cofactor is Mg(2+). Mn(2+) serves as cofactor. In terms of tissue distribution, urogenital ridge, testis, ovary, brain and lungs.

It localises to the membrane. It carries out the reaction L-threonyl-[receptor-protein] + ATP = O-phospho-L-threonyl-[receptor-protein] + ADP + H(+). The catalysed reaction is L-seryl-[receptor-protein] + ATP = O-phospho-L-seryl-[receptor-protein] + ADP + H(+). Bone morphogenetic protein (BMP) type I receptor that is involved in a wide variety of biological processes, including bone, heart, cartilage, nervous, and reproductive system development and regulation. As a type I receptor, forms heterotetrameric receptor complexes with the type II receptors AMHR2, ACVR2A ors ACVR2B. Upon binding of ligands such as BMP7 or GDF2/BMP9 to the heteromeric complexes, type II receptors transphosphorylate ACVR1 intracellular domain. In turn, ACVR1 kinase domain is activated and subsequently phosphorylates SMAD1/5/8 proteins that transduce the signal. In addition to its role in mediating BMP pathway-specific signaling, suppresses TGFbeta/activin pathway signaling by interfering with the binding of activin to its type II receptor. Besides canonical SMAD signaling, can activate non-canonical pathways such as p38 mitogen-activated protein kinases/MAPKs. May promote the expression of HAMP, potentially via its interaction with BMP6. The polypeptide is Activin receptor type-1 (Acvr1) (Rattus norvegicus (Rat)).